The following is a 422-amino-acid chain: Serpin A11 (422 aa).

An N-terminal signal peptide occupies residues 1–24 (MGPVWLWLLIAELLLPVHYQPSSA). The segment at 25–45 (HGDKSLGAPQPASHQSLEPAP) is disordered. Asparagine 106, asparagine 169, asparagine 350, and asparagine 385 each carry an N-linked (GlcNAc...) asparagine glycan.

This sequence belongs to the serpin family.

The protein localises to the secreted. This Rattus norvegicus (Rat) protein is Serpin A11 (Serpina11).